Reading from the N-terminus, the 340-residue chain is GPALPP motifs-containing protein 1 (340 aa).

The segment at Met1–Asp304 is disordered. Ala2 is modified (N-acetylalanine). Positions Gly7–Pro12 match the GPALPP motif 1 motif. Ser28 carries the phosphoserine modification. The short motif at Gly32–Pro37 is the GPALPP motif 2 element. A compositionally biased stretch (acidic residues) spans Gly60 to Ser69. The short motif at Gly92–Pro97 is the GPALPP motif 3 element. A Phosphoserine modification is found at Ser105. The segment covering Pro107–Pro116 has biased composition (pro residues). The GPALPP motif 4 signature appears at Gly112–Pro117. Basic and acidic residues predominate over residues Gln124–Pro133. A Phosphothreonine modification is found at Thr138. 2 positions are modified to phosphoserine: Ser140 and Ser141. Composition is skewed to basic and acidic residues over residues Glu163–Val187, Pro227–Ala261, Glu269–Ile279, and Lys287–Asp304. A Glycyl lysine isopeptide (Lys-Gly) (interchain with G-Cter in SUMO2) cross-link involves residue Lys271. A Glycyl lysine isopeptide (Lys-Gly) (interchain with G-Cter in SUMO2) cross-link involves residue Lys308.

The sequence is that of GPALPP motifs-containing protein 1 (GPALPP1) from Homo sapiens (Human).